The following is a 1196-amino-acid chain: Ice nucleation protein (1196 aa).

Residues 172–1147 (ATYGSTLSGD…LSAGEDSTLI (976 aa)) are octapeptide periodicity. 3 disordered regions span residues 269–304 (GYGSTQTSGEDSSLTAGYGSTQTAQEGSNLTAGYGS), 319–352 (GSTQTSGGDSSLTAGYGSTQTAQEGSNLTSGYGS), and 415–442 (GSTQTSGSDSSLTAGYGSTQTAQEGSNL). Composition is skewed to polar residues over residues 271-298 (GSTQTSGEDSSLTAGYGSTQTAQEGSNL) and 319-346 (GSTQTSGGDSSLTAGYGSTQTAQEGSNL).

It belongs to the bacterial ice nucleation protein family. Membrane environment or aggregation seems to be required for ice nucleation activity.

Its subcellular location is the cell outer membrane. Its function is as follows. Ice nucleation proteins enable bacteria to nucleate crystallization in supercooled water. The protein is Ice nucleation protein (inaV) of Pseudomonas syringae.